The following is a 143-amino-acid chain: FIS1-related protein fis-1 (143 aa).

A helical membrane pass occupies residues 121 to 141 (LGLLGGAVAVVGGLVIAGLAF).

This sequence belongs to the FIS1 family.

The protein localises to the mitochondrion outer membrane. It is found in the peroxisome membrane. Involved in the fragmentation of the mitochondrial network. Involved in perinuclear clustering of the mitochondrial network. Plays a role in removal of ultraviolet C radiation-induced mitochondrial DNA damage. May act, redundantly with fis-2, downstream of mitochondrial fission, before the fission products participate in either mitochondrial homeostasis, mitophagy, or apoptosis. In Caenorhabditis elegans, this protein is FIS1-related protein fis-1.